An 809-amino-acid polypeptide reads, in one-letter code: WASP homolog-associated protein with actin, membranes and microtubules (809 aa).

A mediates association with membranes region spans residues Met-1 to Ile-260. A mediates interaction with microtubules region spans residues Leu-261 to Ser-630. Coiled coils occupy residues Pro-271–Ile-298, Glu-384–Arg-479, and Ser-512–Leu-542. 4 disordered regions span residues Tyr-506–Lys-528, Lys-546–Leu-571, Ile-586–Cys-612, and Gln-627–Pro-707. Positions Met-515–Lys-528 are enriched in basic and acidic residues. At Ser-606 the chain carries Phosphoserine. The mediates actin nucleation stretch occupies residues Lys-631–Gly-809. Positions Leu-638–Leu-659 are enriched in pro residues. Residues Leu-662 to Asn-673 show a composition bias toward polar residues. 2 WH2 domains span residues Ser-709–Val-727 and Ile-739–Val-756. Residues Lys-754–Gly-809 form a disordered region. The span at Asn-763–Arg-772 shows a compositional bias: polar residues. Residues Ser-770 to Glu-797 adopt a coiled-coil conformation. The span at Asp-794–Asp-803 shows a compositional bias: acidic residues. The residue at position 795 (Ser-795) is a Phosphoserine.

In terms of assembly, interacts with ACTR3; indicative for an association with the ARP2/3 complex. Associates with microtubules; in vitro binds to tubulin heterodimer in a 1:1 stoichiometry; decorates microtubules with a repeat of 80 A along protofilaments. Interacts with RHOD (in GTP-bound form). In terms of tissue distribution, expressed in brain, lung, heart, colon and kidney (at protein level).

Its subcellular location is the cytoplasm. The protein resides in the endoplasmic reticulum-Golgi intermediate compartment. It localises to the cytoplasmic vesicle membrane. The protein localises to the golgi apparatus. It is found in the cis-Golgi network. Functionally, acts as a nucleation-promoting factor (NPF) that stimulates Arp2/3-mediated actin polymerization both at the Golgi apparatus and along tubular membranes. Its activity in membrane tubulation requires F-actin and interaction with microtubules. Proposed to use coordinated actin-nucleating and microtubule-binding activities of distinct WHAMM molecules to drive membrane tubule elongation; when MT-bound can recruit and remodel membrane vesicles but is prevented to activate the Arp2/3 complex. Involved as a regulator of Golgi positioning and morphology. Participates in vesicle transport between the reticulum endoplasmic and the Golgi complex. Required for RhoD-dependent actin reorganization such as in cell adhesion and cell migration. In Homo sapiens (Human), this protein is WASP homolog-associated protein with actin, membranes and microtubules (WHAMM).